The sequence spans 264 residues: Thymidylate synthase (264 aa).

Residue Arg-21 coordinates dUMP. Residue His-51 participates in (6R)-5,10-methylene-5,6,7,8-tetrahydrofolate binding. Arg-126–Arg-127 serves as a coordination point for dUMP. Cys-146 serves as the catalytic Nucleophile. DUMP contacts are provided by residues Arg-166–Asp-169, Asn-177, and His-207–Tyr-209. Asp-169 contacts (6R)-5,10-methylene-5,6,7,8-tetrahydrofolate. Ala-263 provides a ligand contact to (6R)-5,10-methylene-5,6,7,8-tetrahydrofolate.

The protein belongs to the thymidylate synthase family. Bacterial-type ThyA subfamily. As to quaternary structure, homodimer.

Its subcellular location is the cytoplasm. It carries out the reaction dUMP + (6R)-5,10-methylene-5,6,7,8-tetrahydrofolate = 7,8-dihydrofolate + dTMP. Its pathway is pyrimidine metabolism; dTTP biosynthesis. Its function is as follows. Catalyzes the reductive methylation of 2'-deoxyuridine-5'-monophosphate (dUMP) to 2'-deoxythymidine-5'-monophosphate (dTMP) while utilizing 5,10-methylenetetrahydrofolate (mTHF) as the methyl donor and reductant in the reaction, yielding dihydrofolate (DHF) as a by-product. This enzymatic reaction provides an intracellular de novo source of dTMP, an essential precursor for DNA biosynthesis. The protein is Thymidylate synthase of Mesorhizobium japonicum (strain LMG 29417 / CECT 9101 / MAFF 303099) (Mesorhizobium loti (strain MAFF 303099)).